Reading from the N-terminus, the 486-residue chain is Membrane-bound lytic murein transglycosylase F (486 aa).

The N-terminal stretch at 1–21 is a signal peptide; sequence MTRIKLSYFTIGLVALLLALA. Residues 22–268 are non-LT domain; it reads LWPNIPWRNG…RLEEKYLGHV (247 aa). An LT domain region spans residues 269 to 486; that stretch reads GSFDYVDTKT…VVGPGWSIGD (218 aa). The active site involves E313.

It in the N-terminal section; belongs to the bacterial solute-binding protein 3 family. This sequence in the C-terminal section; belongs to the transglycosylase Slt family.

It is found in the cell outer membrane. The catalysed reaction is Exolytic cleavage of the (1-&gt;4)-beta-glycosidic linkage between N-acetylmuramic acid (MurNAc) and N-acetylglucosamine (GlcNAc) residues in peptidoglycan, from either the reducing or the non-reducing ends of the peptidoglycan chains, with concomitant formation of a 1,6-anhydrobond in the MurNAc residue.. Murein-degrading enzyme that degrades murein glycan strands and insoluble, high-molecular weight murein sacculi, with the concomitant formation of a 1,6-anhydromuramoyl product. Lytic transglycosylases (LTs) play an integral role in the metabolism of the peptidoglycan (PG) sacculus. Their lytic action creates space within the PG sacculus to allow for its expansion as well as for the insertion of various structures such as secretion systems and flagella. This is Membrane-bound lytic murein transglycosylase F from Yersinia pestis bv. Antiqua (strain Antiqua).